Here is a 694-residue protein sequence, read N- to C-terminus: Elongation factor G (694 aa).

Residues Ser-9–Lys-288 enclose the tr-type G domain. Residues Ala-18 to Thr-25, Asp-82 to His-86, and Asn-136 to Asp-139 each bind GTP.

Belongs to the TRAFAC class translation factor GTPase superfamily. Classic translation factor GTPase family. EF-G/EF-2 subfamily.

The protein localises to the cytoplasm. Catalyzes the GTP-dependent ribosomal translocation step during translation elongation. During this step, the ribosome changes from the pre-translocational (PRE) to the post-translocational (POST) state as the newly formed A-site-bound peptidyl-tRNA and P-site-bound deacylated tRNA move to the P and E sites, respectively. Catalyzes the coordinated movement of the two tRNA molecules, the mRNA and conformational changes in the ribosome. The sequence is that of Elongation factor G from Chlamydia caviae (strain ATCC VR-813 / DSM 19441 / 03DC25 / GPIC) (Chlamydophila caviae).